The chain runs to 773 residues: DNA gyrase subunit B (773 aa).

The region spanning 416–530 (SEIFLVEGDS…QGHVFIAQAP (115 aa)) is the Toprim domain. Mg(2+) is bound by residues Glu-422, Asp-495, and Asp-497.

Belongs to the type II topoisomerase GyrB family. Heterotetramer, composed of two GyrA and two GyrB chains. In the heterotetramer, GyrA contains the active site tyrosine that forms a transient covalent intermediate with DNA, while GyrB binds cofactors and catalyzes ATP hydrolysis. It depends on Mg(2+) as a cofactor. Requires Mn(2+) as cofactor. Ca(2+) serves as cofactor.

It localises to the cytoplasm. It carries out the reaction ATP-dependent breakage, passage and rejoining of double-stranded DNA.. A type II topoisomerase that negatively supercoils closed circular double-stranded (ds) DNA in an ATP-dependent manner to modulate DNA topology and maintain chromosomes in an underwound state. Negative supercoiling favors strand separation, and DNA replication, transcription, recombination and repair, all of which involve strand separation. Also able to catalyze the interconversion of other topological isomers of dsDNA rings, including catenanes and knotted rings. Type II topoisomerases break and join 2 DNA strands simultaneously in an ATP-dependent manner. The protein is DNA gyrase subunit B of Helicobacter pylori (strain J99 / ATCC 700824) (Campylobacter pylori J99).